The following is an 87-amino-acid chain: Small ribosomal subunit protein uS17 (87 aa).

This sequence belongs to the universal ribosomal protein uS17 family. Part of the 30S ribosomal subunit.

In terms of biological role, one of the primary rRNA binding proteins, it binds specifically to the 5'-end of 16S ribosomal RNA. This Staphylococcus carnosus (strain TM300) protein is Small ribosomal subunit protein uS17.